The sequence spans 414 residues: Putative cytochrome P450 126 (414 aa).

Cys-363 serves as a coordination point for heme.

Belongs to the cytochrome P450 family. It depends on heme as a cofactor.

In Mycobacterium tuberculosis (strain CDC 1551 / Oshkosh), this protein is Putative cytochrome P450 126 (cyp126).